The sequence spans 228 residues: 2-C-methyl-D-erythritol 4-phosphate cytidylyltransferase (228 aa).

It belongs to the IspD/TarI cytidylyltransferase family. IspD subfamily.

It catalyses the reaction 2-C-methyl-D-erythritol 4-phosphate + CTP + H(+) = 4-CDP-2-C-methyl-D-erythritol + diphosphate. Its pathway is isoprenoid biosynthesis; isopentenyl diphosphate biosynthesis via DXP pathway; isopentenyl diphosphate from 1-deoxy-D-xylulose 5-phosphate: step 2/6. In terms of biological role, catalyzes the formation of 4-diphosphocytidyl-2-C-methyl-D-erythritol from CTP and 2-C-methyl-D-erythritol 4-phosphate (MEP). The sequence is that of 2-C-methyl-D-erythritol 4-phosphate cytidylyltransferase from Dechloromonas aromatica (strain RCB).